Here is a 147-residue protein sequence, read N- to C-terminus: Probable flagellum biosynthesis repressor protein FlbT (147 aa).

Belongs to the FlbT family.

In terms of biological role, has a post-transcriptional repressor function in flagellum biogenesis. Associates with the 5'-UTR of fljK mRNA and promotes its degradation. The protein is Probable flagellum biosynthesis repressor protein FlbT of Mesorhizobium japonicum (strain LMG 29417 / CECT 9101 / MAFF 303099) (Mesorhizobium loti (strain MAFF 303099)).